A 111-amino-acid chain; its full sequence is Nucleoid-associated protein VF_1686 (111 aa).

Disordered regions lie at residues Met1–Gln23 and Thr89–Phe111.

It belongs to the YbaB/EbfC family. Homodimer.

Its subcellular location is the cytoplasm. The protein localises to the nucleoid. Binds to DNA and alters its conformation. May be involved in regulation of gene expression, nucleoid organization and DNA protection. This is Nucleoid-associated protein VF_1686 from Aliivibrio fischeri (strain ATCC 700601 / ES114) (Vibrio fischeri).